The sequence spans 212 residues: Large ribosomal subunit protein mL48 (212 aa).

The transit peptide at 1-28 (MNGALGKVLCLKNDTIFKQAFSLLRFRT) directs the protein to the mitochondrion. Residue Lys-199 is modified to N6-succinyllysine.

This sequence belongs to the mitochondrion-specific ribosomal protein mL48 family. Component of the mitochondrial ribosome large subunit (39S) which comprises a 16S rRNA and about 50 distinct proteins. Interacts with OXA1L.

It is found in the mitochondrion. The polypeptide is Large ribosomal subunit protein mL48 (MRPL48) (Bos taurus (Bovine)).